A 342-amino-acid polypeptide reads, in one-letter code: CMP-N-acetylneuraminate-beta-galactosamide-alpha-2,3-sialyltransferase 1 (342 aa).

The Cytoplasmic segment spans residues 1–10 (MVTVRKRNVK). Residues 11-28 (VFTFAFVLITVTSFLLNY) form a helical; Signal-anchor for type II membrane protein membrane-spanning segment. Over 29 to 342 (KHQVTMTTWD…IEKIKFFKGR (314 aa)) the chain is Lumenal. Cystine bridges form between Cys61/Cys66, Cys63/Cys141, and Cys144/Cys283. Asn81 carries N-linked (GlcNAc...) asparagine glycosylation. Residue Gln107 participates in substrate binding. N-linked (GlcNAc...) asparagine glycosylation is present at Asn116. Substrate is bound by residues Asn149 and Asn172. 2 N-linked (GlcNAc...) asparagine glycosylation sites follow: Asn203 and Asn229. Substrate contacts are provided by Tyr232, Tyr268, Gly272, Gly292, and His301. A glycan (N-linked (GlcNAc...) asparagine) is linked at Asn306. His318 is a binding site for substrate. N-linked (GlcNAc...) asparagine glycosylation is present at Asn325.

It belongs to the glycosyltransferase 29 family. The soluble form derives from the membrane form by proteolytic processing.

The protein localises to the golgi apparatus. Its subcellular location is the golgi stack membrane. The protein resides in the secreted. It carries out the reaction a beta-D-galactosyl-(1-&gt;3)-N-acetyl-alpha-D-galactosaminyl derivative + CMP-N-acetyl-beta-neuraminate = an N-acetyl-alpha-neuraminyl-(2-&gt;3)-beta-D-galactosyl-(1-&gt;3)-N-acetyl-alpha-D-galactosaminyl derivative + CMP + H(+). Its pathway is protein modification; protein glycosylation. Its function is as follows. Responsible for the synthesis of the sequence NeuAc-alpha-2,3-Gal-beta-1,3-GalNAc- found on sugar chains O-linked to Thr or Ser and also as a terminal sequence on certain gangliosides. SIAT4A and SIAT4B sialylate the same acceptor substrates but exhibit different Km values. The chain is CMP-N-acetylneuraminate-beta-galactosamide-alpha-2,3-sialyltransferase 1 (ST3GAL1) from Gallus gallus (Chicken).